A 231-amino-acid chain; its full sequence is Urease accessory protein UreF (231 aa).

Belongs to the UreF family. In terms of assembly, ureD, UreF and UreG form a complex that acts as a GTP-hydrolysis-dependent molecular chaperone, activating the urease apoprotein by helping to assemble the nickel containing metallocenter of UreC. The UreE protein probably delivers the nickel.

The protein localises to the cytoplasm. Functionally, required for maturation of urease via the functional incorporation of the urease nickel metallocenter. The chain is Urease accessory protein UreF from Marinobacter nauticus (strain ATCC 700491 / DSM 11845 / VT8) (Marinobacter aquaeolei).